We begin with the raw amino-acid sequence, 117 residues long: UPF0251 protein cbdbA217 (117 aa).

The protein belongs to the UPF0251 family.

This Dehalococcoides mccartyi (strain CBDB1) protein is UPF0251 protein cbdbA217.